The sequence spans 64 residues: Lantipeptide Flvbeta.d (64 aa).

Positions 1-31 are cleaved as a propeptide — cleaved by FlvT; sequence MDNNTEKFNELAAIADESELNEMLDENITGA. A cross-link (lanthionine (Ser-Cys); by FlvM2) is located at residues 33 to 37; it reads STIQC. 2,3-didehydrobutyrine; by FlvM2 is present on residues Thr-34 and Thr-41. 3 consecutive cross-links (beta-methyllanthionine (Thr-Cys); by FlvM2) follow at residues 44–52, 55–58, and 59–62; these read TILSVVFDC, TSAC, and TPPC. The lanthionine (Ser-Cys); by FlvM2 cross-link spans 47–53; sequence SVVFDCC.

Post-translationally, contains LL-lanthionine, DL-lanthionine, and DL-beta-methyllanthionine, when coepressed in E.coli with the flavecin synthetase FlvM2.

Its subcellular location is the secreted. Functionally, lanthionine-containing peptide that does probably not show antibacterial activity, since its analog [+2]Flvbeta.d does not show antibacterial activity against M.luteus. Also does not show antibiotic activity when tested with [Del2]Flvalpha.a, an analog of Flvalpha.a, which is encoded by the same operon than Flvbeta.d. The bactericidal activity of lantibiotics is based on depolarization of energized bacterial cytoplasmic membranes, initiated by the formation of aqueous transmembrane pores. In Ruminococcus flavefaciens, this protein is Lantipeptide Flvbeta.d.